Consider the following 473-residue polypeptide: tRNA-2-methylthio-N(6)-dimethylallyladenosine synthase (473 aa).

Residues 5–125 form the MTTase N-terminal domain; the sequence is RKLHIKSFGC…LPQLLAEAAR (121 aa). [4Fe-4S] cluster is bound by residues cysteine 14, cysteine 50, cysteine 88, cysteine 166, cysteine 170, and cysteine 173. Residues 152 to 384 form the Radical SAM core domain; that stretch reads RARGISAFVT…QELIDSQQAA (233 aa). The TRAM domain occupies 387-449; the sequence is AAVIGTTVEV…RYSLIGELAA (63 aa). Residues 452-473 are disordered; sequence QHSGFATRSEDSPQSLPITTGA.

It belongs to the methylthiotransferase family. MiaB subfamily. Monomer. [4Fe-4S] cluster is required as a cofactor.

The protein resides in the cytoplasm. The catalysed reaction is N(6)-dimethylallyladenosine(37) in tRNA + (sulfur carrier)-SH + AH2 + 2 S-adenosyl-L-methionine = 2-methylsulfanyl-N(6)-dimethylallyladenosine(37) in tRNA + (sulfur carrier)-H + 5'-deoxyadenosine + L-methionine + A + S-adenosyl-L-homocysteine + 2 H(+). In terms of biological role, catalyzes the methylthiolation of N6-(dimethylallyl)adenosine (i(6)A), leading to the formation of 2-methylthio-N6-(dimethylallyl)adenosine (ms(2)i(6)A) at position 37 in tRNAs that read codons beginning with uridine. The polypeptide is tRNA-2-methylthio-N(6)-dimethylallyladenosine synthase (Rhodopseudomonas palustris (strain BisB18)).